Reading from the N-terminus, the 252-residue chain is MRILLTNDDGIHAEGLASLERVARTLSDDVWVVAPEQDQSGYAHSLSISEPLRLRKIGEKHFAVRGTPTDCVIMGVKKILPGAPDVILSGINSGANIADDVTYSGTVAGAMEGALLGIRSIALSQGYSYVGEDRIVPYETTEALAPALLKKLVATPLPDGVLLNVNFPNCLPEEVVGTVVTMQGKLVHSLWVDERRDGRGLPYYWLRFGREPVEGKQGTDLHALRNRLVSVTPLQLDLTAHEIRDQLSKALA.

A divalent metal cation-binding residues include D8, D9, S40, and N92.

Belongs to the SurE nucleotidase family. A divalent metal cation serves as cofactor.

It localises to the cytoplasm. It carries out the reaction a ribonucleoside 5'-phosphate + H2O = a ribonucleoside + phosphate. Its function is as follows. Nucleotidase that shows phosphatase activity on nucleoside 5'-monophosphates. This Mesorhizobium japonicum (strain LMG 29417 / CECT 9101 / MAFF 303099) (Mesorhizobium loti (strain MAFF 303099)) protein is 5'-nucleotidase SurE.